We begin with the raw amino-acid sequence, 464 residues long: MQTLMSHSRITPLPGAITKEEIKNQLLVHERRFLSKPNRKDQWNVLPQSAHSKNTVNPVRKIADACAVPPHPEKKVIKLHLGDPSVGGKLPPSEIAVQAMHESVSSHMFDGYGPAVGALAAREAIVERYSSADNVFTADDVVLASGCSHALQMAIEAVANAGENILVPHPGFPLYSTLCRPHNIVDKPYKIDMTGEDVRIDLSYMATIIDDNTKAIIVNNPGNPTGGVFTKEHLEEILAFAHQYKLIIIADEIYGDLVYNGATFYPLASLSPKVPIITCDGIAKRWMVPGWRLGWLIIHNHFGVLTDVKNGIVALSQKIVGPCSLVQGALPKILRETPEDYFVYTRNVIETNANIVDSILADVPGMRVVKPKGAMYMMVNISRTAYGSDVSFCQNLIREESVFCLPGQAFSAPGYFRVVLTCGSEDMEEAALRIREFCYRNFNQHSDSEDSSDEGLDLSAMESD.

At Lys284 the chain carries N6-(pyridoxal phosphate)lysine.

It belongs to the class-I pyridoxal-phosphate-dependent aminotransferase family. As to quaternary structure, homodimer. It depends on pyridoxal 5'-phosphate as a cofactor. Expressed in the muscle. Expressed in the hypodermis and intestine.

The catalysed reaction is L-tyrosine + 2-oxoglutarate = 3-(4-hydroxyphenyl)pyruvate + L-glutamate. It carries out the reaction 3-hydroxy-L-phenylalanine + 2-oxoglutarate = 3-(3-hydroxyphenyl)pyruvate + L-glutamate. It participates in amino-acid degradation; L-phenylalanine degradation; acetoacetate and fumarate from L-phenylalanine: step 2/6. Transaminase involved in tyrosine breakdown. Converts tyrosine to p-hydroxyphenylpyruvate. Has no transaminase activity towards phenylalanine. Plays protective role against oxidative stress, metabolizing meta-tyrosine and negatively regulating its accumulation. Plays a role in modulating the daf-2/insulin receptor-like transduction pathway through regulating tyrosine levels. Negatively regulates dauer formation. Plays a role in longevity. This chain is Tyrosine aminotransferase, found in Caenorhabditis elegans.